The chain runs to 422 residues: Pre-B-cell leukemia transcription factor 2 (422 aa).

The segment at 1–43 (MDEQGRLMQARGVGIPGHPIHGGPQTLTPHPMHEPPADNGEPR) is disordered. Residues 31 to 43 (PMHEPPADNGEPR) are compositionally biased toward basic and acidic residues. The PBC domain maps to 42–236 (PRKQDIGDIL…VMILRSRFLD (195 aa)). The interval 49–128 (DILQQIMTIT…EGVAGPEKGG (80 aa)) is PBC-A. Residues 131 to 236 (AAAAAAAAAS…VMILRSRFLD (106 aa)) form a PBC-B region. Residues 237–299 (ARRKRRNFSK…NKRIRYKKNI (63 aa)) constitute a DNA-binding region (homeobox). Disordered regions lie at residues 319–341 (QGGH…GSFN) and 353–422 (QGLN…DTSN). A compositionally biased stretch (polar residues) spans 401–410 (VTPSSVTSPT).

Belongs to the TALE/PBX homeobox family.

It localises to the nucleus. Its function is as follows. Transcriptional activator that binds the sequence 5'-ATCAATCAA-3'. This chain is Pre-B-cell leukemia transcription factor 2, found in Xenopus tropicalis (Western clawed frog).